The following is a 218-amino-acid chain: Runt-related transcription factor 2 (218 aa).

The Runt domain occupies 67–195 (RGHKFYLEKK…TVDGPREPRR (129 aa)). The required for interaction with FOXO1 stretch occupies residues 122-138 (VMAGNDENYSAELRNAS). Positions 189 to 218 (GPREPRRHRQKLDDSKPSLFSDRLSDLGRI) are disordered. Lys204 participates in a covalent cross-link: Glycyl lysine isopeptide (Lys-Gly) (interchain with G-Cter in SUMO2).

Heterodimer of an alpha and a beta subunit. The alpha subunit binds DNA as a monomer and through the Runt domain. DNA-binding is increased by heterodimerization. Interacts with XRCC6 (Ku70) and XRCC5 (Ku80). Interacts with CCNB1, KAT6A and KAT6B. Interacts with HIVEP3. Interacts with IFI204. Interaction with SATB2; the interaction results in enhanced DNA binding and transactivation by these transcription factors. Binds to HIPK3. Interacts with FOXO1 (via a C-terminal region); the interaction inhibits RUNX2 transcriptional activity towards BGLAP. Interacts with FOXP3. Interacts with TMEM119. Interacts with OLFM2. Interacts with IPO7; the interaction inhibits RUNX2 nuclear translocation in osteoblasts. Phosphorylated; probably by MAP kinases (MAPK). Phosphorylation by HIPK3 is required for the SPEN/MINT and FGF2 transactivation during osteoblastic differentiation.

The protein resides in the nucleus. It localises to the cytoplasm. Functionally, transcription factor involved in osteoblastic differentiation and skeletal morphogenesis. Essential for the maturation of osteoblasts and both intramembranous and endochondral ossification. CBF binds to the core site, 5'-PYGPYGGT-3', of a number of enhancers and promoters, including murine leukemia virus, polyomavirus enhancer, T-cell receptor enhancers, osteocalcin, osteopontin, bone sialoprotein, alpha 1(I) collagen, LCK, IL-3 and GM-CSF promoters. Inhibits KAT6B-dependent transcriptional activation. In osteoblasts, supports transcription activation: synergizes with SPEN/MINT to enhance FGFR2-mediated activation of the osteocalcin FGF-responsive element (OCFRE). The chain is Runt-related transcription factor 2 (Runx2) from Rattus norvegicus (Rat).